A 100-amino-acid polypeptide reads, in one-letter code: Class II hydrophobin CU (100 aa).

The N-terminal stretch at 1-25 (MQFSIATIALFLSSAMAAPYSGNSN) is a signal peptide. Cystine bridges form between Cys-32–Cys-82, Cys-42–Cys-72, Cys-43–Cys-55, and Cys-83–Cys-94.

Belongs to the cerato-ulmin hydrophobin family. In terms of assembly, homotetramer. Further self-assembles to form highly ordered films at water-air interfaces through intermolecular interactions.

It localises to the secreted. It is found in the cell wall. Aerial growth, conidiation, and dispersal of filamentous fungi in the environment rely upon a capability of their secreting small amphipathic proteins called hydrophobins (HPBs) with low sequence identity. Class I can self-assemble into an outermost layer of rodlet bundles on aerial cell surfaces, conferring cellular hydrophobicity that supports fungal growth, development and dispersal; whereas Class II form highly ordered films at water-air interfaces through intermolecular interactions but contribute nothing to the rodlet structure. CU is a class II hydrophobin that is implicated in the pathogenicity of this fungus on elm trees. Required for hydrophobicity and adherence of the cells and acts as a parasitic fitness factor by protecting infectious propagules from desiccation. Reduces the interfacial tension of both oil-water and air-water interfaces. The protein is Class II hydrophobin CU of Ophiostoma ulmi (Dutch elm disease fungus).